The sequence spans 467 residues: Vacuolar protein sorting-associated protein 62 (467 aa).

The chain crosses the membrane as a helical span at residues 17 to 37; that stretch reads FLVTFIIYSIIPCRAVLVPWL. N-linked (GlcNAc...) asparagine glycosylation is found at asparagine 74 and asparagine 145.

It belongs to the VPS62 family.

The protein localises to the membrane. Functionally, involved in vacuolar protein sorting. The protein is Vacuolar protein sorting-associated protein 62 (VPS62) of Saccharomyces cerevisiae (strain ATCC 204508 / S288c) (Baker's yeast).